The following is a 284-amino-acid chain: D-tagatose-1,6-bisphosphate aldolase subunit GatY (284 aa).

Asp-82 (proton donor) is an active-site residue. Zn(2+)-binding residues include His-83 and His-180. Position 181 (Gly-181) interacts with dihydroxyacetone phosphate. Residue His-208 coordinates Zn(2+). Residues 209–211 (GAS) and 230–233 (NVAT) each bind dihydroxyacetone phosphate.

It belongs to the class II fructose-bisphosphate aldolase family. TagBP aldolase GatY subfamily. In terms of assembly, forms a complex with GatZ. It depends on Zn(2+) as a cofactor.

It carries out the reaction D-tagatofuranose 1,6-bisphosphate = D-glyceraldehyde 3-phosphate + dihydroxyacetone phosphate. It participates in carbohydrate metabolism; D-tagatose 6-phosphate degradation; D-glyceraldehyde 3-phosphate and glycerone phosphate from D-tagatose 6-phosphate: step 2/2. Functionally, catalytic subunit of the tagatose-1,6-bisphosphate aldolase GatYZ, which catalyzes the reversible aldol condensation of dihydroxyacetone phosphate (DHAP or glycerone-phosphate) with glyceraldehyde 3-phosphate (G3P) to produce tagatose 1,6-bisphosphate (TBP). Requires GatZ subunit for full activity and stability. Is involved in the catabolism of galactitol. In Escherichia coli O7:K1 (strain IAI39 / ExPEC), this protein is D-tagatose-1,6-bisphosphate aldolase subunit GatY.